Reading from the N-terminus, the 307-residue chain is Ornithine carbamoyltransferase (307 aa).

Residues 56–59, Q83, R107, and 134–137 each bind carbamoyl phosphate; these read STRT and HPCQ. Residues N165, D223, and 227–228 contribute to the L-ornithine site; that span reads SM. Residues 263 to 264 and R291 each bind carbamoyl phosphate; that span reads CL.

This sequence belongs to the aspartate/ornithine carbamoyltransferase superfamily. OTCase family.

It is found in the cytoplasm. The catalysed reaction is carbamoyl phosphate + L-ornithine = L-citrulline + phosphate + H(+). It participates in amino-acid degradation; L-arginine degradation via ADI pathway; carbamoyl phosphate from L-arginine: step 2/2. Functionally, reversibly catalyzes the transfer of the carbamoyl group from carbamoyl phosphate (CP) to the N(epsilon) atom of ornithine (ORN) to produce L-citrulline. The sequence is that of Ornithine carbamoyltransferase from Cupriavidus taiwanensis (strain DSM 17343 / BCRC 17206 / CCUG 44338 / CIP 107171 / LMG 19424 / R1) (Ralstonia taiwanensis (strain LMG 19424)).